The primary structure comprises 129 residues: MAKQVRKASKKTKLKVPSGVAHVQATFNNTIITITNPAGDVLAWCSAGASGFKGARKSTPFAAKIAAETAARKSMDYGLRQISVIIKGAGSGRESAIRGLSEAGLEIKLLRDITSIPHNGCRPPKKRRV.

It belongs to the universal ribosomal protein uS11 family. Part of the 30S ribosomal subunit.

It localises to the plastid. The protein resides in the chloroplast. The polypeptide is Small ribosomal subunit protein uS11c (Oltmannsiellopsis viridis (Marine flagellate)).